Reading from the N-terminus, the 188-residue chain is Elongation factor P-like protein (188 aa).

Belongs to the elongation factor P family.

The chain is Elongation factor P-like protein from Xylella fastidiosa (strain M12).